Consider the following 293-residue polypeptide: Ribosomal protein L11 methyltransferase (293 aa).

S-adenosyl-L-methionine-binding residues include threonine 145, glycine 166, aspartate 188, and asparagine 230.

The protein belongs to the methyltransferase superfamily. PrmA family.

The protein resides in the cytoplasm. It catalyses the reaction L-lysyl-[protein] + 3 S-adenosyl-L-methionine = N(6),N(6),N(6)-trimethyl-L-lysyl-[protein] + 3 S-adenosyl-L-homocysteine + 3 H(+). In terms of biological role, methylates ribosomal protein L11. The protein is Ribosomal protein L11 methyltransferase of Mannheimia succiniciproducens (strain KCTC 0769BP / MBEL55E).